Reading from the N-terminus, the 275-residue chain is Chlorophyll a-b binding protein 3, chloroplastic (275 aa).

Trp58 serves as a coordination point for chlorophyll b. The chlorophyll a site is built by Phe78, Ser84, and Glu102. Chlorophyll b contacts are provided by Arg107, Ile142, Glu169, and Arg172. 6 residues coordinate chlorophyll a: Lys226, Glu227, Asn230, Arg232, Gln244, and His259. The chain crosses the membrane as a helical span at residues 233–253 (LAMLAILGYFIQGLVTGVGPY).

Belongs to the light-harvesting chlorophyll a/b-binding (LHC) protein family. In terms of assembly, the LHC complex consists of chlorophyll a-b binding proteins. Requires Binds at least 14 chlorophylls (8 Chl-a and 6 Chl-b) and carotenoids such as lutein and neoxanthin. as cofactor. Post-translationally, photoregulated by reversible phosphorylation of its threonine residues.

Its subcellular location is the plastid. It is found in the chloroplast thylakoid membrane. In terms of biological role, the light-harvesting complex (LHC) functions as a light receptor, it captures and delivers excitation energy to photosystems with which it is closely associated. May channel protons produced in the catalytic Mn center of water oxidation into the thylakoid lumen. This chain is Chlorophyll a-b binding protein 3, chloroplastic, found in Pisum sativum (Garden pea).